We begin with the raw amino-acid sequence, 275 residues long: 3-methyl-2-oxobutanoate hydroxymethyltransferase (275 aa).

Positions 51 and 90 each coordinate Mg(2+). 3-methyl-2-oxobutanoate is bound by residues 51–52 (DS), Asp-90, and Lys-120. Glu-122 contacts Mg(2+). Glu-189 (proton acceptor) is an active-site residue.

It belongs to the PanB family. As to quaternary structure, homodecamer; pentamer of dimers. Mg(2+) is required as a cofactor.

It is found in the cytoplasm. The enzyme catalyses 3-methyl-2-oxobutanoate + (6R)-5,10-methylene-5,6,7,8-tetrahydrofolate + H2O = 2-dehydropantoate + (6S)-5,6,7,8-tetrahydrofolate. It participates in cofactor biosynthesis; (R)-pantothenate biosynthesis; (R)-pantoate from 3-methyl-2-oxobutanoate: step 1/2. Functionally, catalyzes the reversible reaction in which hydroxymethyl group from 5,10-methylenetetrahydrofolate is transferred onto alpha-ketoisovalerate to form ketopantoate. The polypeptide is 3-methyl-2-oxobutanoate hydroxymethyltransferase (Phenylobacterium zucineum (strain HLK1)).